Here is a 1257-residue protein sequence, read N- to C-terminus: Bifunctional autolysin (1257 aa).

The N-terminal stretch at 1 to 29 (MAKKFNYKLPSMVALTLVGSAVTAHQVQA) is a signal peptide. Over residues 99 to 137 (QVNGDTRATQSTTSNNAKPVTKSTNTTAPKTNNNVTSAG) the composition is skewed to polar residues. 3 disordered regions span residues 99 to 150 (QVNG…NSEN), 173 to 217 (AAPK…KYKP), and 417 to 441 (TQSTTTPTTPSKPSTPSKPSTPSTG). 2 stretches are compositionally biased toward low complexity: residues 173 to 208 (AAPKATPVAPKAKTEATPKVTTFSASAQPRSAAAAP) and 419 to 440 (STTTPTTPSKPSTPSKPSTPST). The segment at 197–776 (ASAQPRSAAA…AVAQPKTAVK (580 aa)) is N-acetylmuramoyl-L-alanine amidase. GW domains are found at residues 444 to 518 (TVAA…YNTA), 520 to 594 (SPVN…DTAK), 613 to 687 (TVSS…YNNA), 689 to 763 (SPVN…VPAA), 785 to 860 (TTQT…VQNL), 862 to 937 (KEVK…APTA), and 944 to 1018 (AAKD…KELI). The endo-beta-N-acetylglucosaminidase stretch occupies residues 777–1257 (AYAVTKPQTT…GKYFDIPQYK (481 aa)).

The protein in the N-terminal section; belongs to the N-acetylmuramoyl-L-alanine amidase 2 family. It in the C-terminal section; belongs to the glycosyl hydrolase 73 family. As to quaternary structure, oligomer; forms a ring structure at the cell surface which is important for efficient partitioning of daughter cells after cell division. Undergoes proteolytic processing to generate the two extracellular lytic enzymes, probably at the septal region on the cell surface.

It localises to the secreted. The enzyme catalyses Hydrolyzes the link between N-acetylmuramoyl residues and L-amino acid residues in certain cell-wall glycopeptides.. It catalyses the reaction an N(4)-(oligosaccharide-(1-&gt;3)-[oligosaccharide-(1-&gt;6)]-beta-D-Man-(1-&gt;4)-beta-D-GlcNAc-(1-&gt;4)-alpha-D-GlcNAc)-L-asparaginyl-[protein] + H2O = an oligosaccharide-(1-&gt;3)-[oligosaccharide-(1-&gt;6)]-beta-D-Man-(1-&gt;4)-D-GlcNAc + N(4)-(N-acetyl-beta-D-glucosaminyl)-L-asparaginyl-[protein]. Endohydrolysis of the di-N-acetylchitobiosyl unit in high-mannose glycopeptides and glycoproteins containing the -[(Man)5(GlcNAc)2]-Asn structure. One N-acetyl-D-glucosamine residue remains attached to the protein; the rest of the oligosaccharide is released intact. Cleaves the peptidoglycan connecting the daughter cells at the end of the cell division cycle, resulting in the separation of the two newly divided cells. Acts as an autolysin in penicillin-induced lysis. The sequence is that of Bifunctional autolysin (atl) from Staphylococcus aureus (strain MRSA252).